The chain runs to 285 residues: tRNA pseudouridine synthase B (285 aa).

The Nucleophile role is filled by aspartate 40.

This sequence belongs to the pseudouridine synthase TruB family. Type 1 subfamily.

It carries out the reaction uridine(55) in tRNA = pseudouridine(55) in tRNA. Functionally, responsible for synthesis of pseudouridine from uracil-55 in the psi GC loop of transfer RNAs. This is tRNA pseudouridine synthase B from Caldanaerobacter subterraneus subsp. tengcongensis (strain DSM 15242 / JCM 11007 / NBRC 100824 / MB4) (Thermoanaerobacter tengcongensis).